A 161-amino-acid chain; its full sequence is Small ribosomal subunit protein uS9 (161 aa).

Disordered regions lie at residues 1-28 (MAQI…PKAP) and 142-161 (KERK…FSKR).

It belongs to the universal ribosomal protein uS9 family.

The sequence is that of Small ribosomal subunit protein uS9 from Clavibacter sepedonicus (Clavibacter michiganensis subsp. sepedonicus).